The chain runs to 255 residues: Small ribosomal subunit protein eS1 (255 aa).

The span at 1–18 (MAVGKNKRLSKGKKGLKK) shows a compositional bias: basic residues. The interval 1–28 (MAVGKNKRLSKGKKGLKKRTQDPFSRKD) is disordered. Ala-2 is modified (N-acetylalanine; partial). Residues 19-28 (RTQDPFSRKD) show a composition bias toward basic and acidic residues.

Belongs to the eukaryotic ribosomal protein eS1 family. Component of the small ribosomal subunit. Mature ribosomes consist of a small (40S) and a large (60S) subunit. The 40S subunit contains about 33 different proteins and 1 molecule of RNA (18S). The 60S subunit contains about 49 different proteins and 3 molecules of RNA (25S, 5.8S and 5S).

The protein localises to the cytoplasm. This chain is Small ribosomal subunit protein eS1, found in Ajellomyces capsulatus (strain H143) (Darling's disease fungus).